We begin with the raw amino-acid sequence, 758 residues long: Catalase-peroxidase (758 aa).

Polar residues predominate over residues M1 to V10. The segment at M1 to R57 is disordered. The segment at residues W128–Y250 is a cross-link (tryptophyl-tyrosyl-methioninium (Trp-Tyr) (with M-276)). H129 serves as the catalytic Proton acceptor. The tryptophyl-tyrosyl-methioninium (Tyr-Met) (with W-128) cross-link spans Y250 to M276. Residue H291 participates in heme b binding.

It belongs to the peroxidase family. Peroxidase/catalase subfamily. In terms of assembly, homodimer or homotetramer. Heme b serves as cofactor. In terms of processing, formation of the three residue Trp-Tyr-Met cross-link is important for the catalase, but not the peroxidase activity of the enzyme.

It catalyses the reaction H2O2 + AH2 = A + 2 H2O. The enzyme catalyses 2 H2O2 = O2 + 2 H2O. Functionally, bifunctional enzyme with both catalase and broad-spectrum peroxidase activity. In Salinispora tropica (strain ATCC BAA-916 / DSM 44818 / JCM 13857 / NBRC 105044 / CNB-440), this protein is Catalase-peroxidase.